The primary structure comprises 434 residues: RNA polymerase II holoenzyme cyclin-like subunit (434 aa).

Residues 23-155 (EARRRVLLLE…LIEEMDSYLL (133 aa)) form the Cyclin N-terminal domain. Residues 248–278 (GSSTNPININNNNNTNTSNNNGTTSTTTTTT) are compositionally biased toward low complexity. 3 disordered regions span residues 248–292 (GSST…DNTE), 301–320 (LTKS…DIDN), and 330–362 (QIQN…GQIS). Residues 330–359 (QIQNQTQHQHQESTHNNTSSTNTGRNGING) show a composition bias toward low complexity.

This sequence belongs to the cyclin family. Cyclin C subfamily. In terms of assembly, component of the SRB8-11 complex, a regulatory module of the Mediator complex.

The protein resides in the nucleus. Functionally, component of the SRB8-11 complex. The SRB8-11 complex is a regulatory module of the Mediator complex which is itself involved in regulation of basal and activated RNA polymerase II-dependent transcription. The SRB8-11 complex may be involved in the transcriptional repression of a subset of genes regulated by Mediator. It may inhibit the association of the Mediator complex with RNA polymerase II to form the holoenzyme complex. The SRB8-11 complex phosphorylates the C-terminal domain (CTD) of the largest subunit of RNA polymerase II. In Candida albicans (strain SC5314 / ATCC MYA-2876) (Yeast), this protein is RNA polymerase II holoenzyme cyclin-like subunit (SSN8).